The primary structure comprises 1194 residues: Multidrug efflux ATP-binding/permease protein Rv0194 (1194 aa).

6 consecutive transmembrane segments (helical) span residues 20 to 40, 56 to 76, 130 to 150, 153 to 173, 258 to 278, and 279 to 299; these read LLLGFGAALAGTVIAVLVPLV, LAPWAVVLVAAAGATYLLMYV, LLFDVPNVLRHVLTLLLGVAV, WLSVPLALLAVLLVPVIGLIA, FALGGWMAAQGSITVGTFVAF, and WACLTLLARPACDLAGMLTIA. One can recognise an ABC transmembrane type-1 1 domain in the interval 21–301; that stretch reads LLGFGAALAG…LAGMLTIAQQ (281 aa). Residues 334–568 form the ABC transporter 1 domain; it reads LEFQRVSFGY…CPRYRELLSP (235 aa). 367–374 is an ATP binding site; it reads GAPGSGKS. A run of 6 helical transmembrane segments spans residues 628 to 648, 660 to 680, 743 to 763, 765 to 785, 847 to 867, and 878 to 898; these read ALSLLLVAVQTCAGLLPPLLI, VLSALWWAALAGTATVVIRWV, LVVAVISVVTLVGILVALLAI, ARLVLLIFTTMPVLALATWQF, LLALYYPFVALLCSLATTLVL, and VISVGALVTYLLYIELLYTPI. In terms of domain architecture, ABC transmembrane type-1 2 spans 628–910; the sequence is ALSLLLVAVQ…LAQMFDDYQR (283 aa). The region spanning 942-1177 is the ABC transporter 2 domain; sequence VVFDAVHYSY…GGHYSRLWAA (236 aa). 976-983 is a binding site for ATP; it reads GSTGSGKS.

This sequence belongs to the ABC transporter superfamily. Lipid exporter (TC 3.A.1.106) family.

Its subcellular location is the cell inner membrane. Its activity is regulated as follows. Efflux is inhibited by reserpine. Functionally, overexpression in M.smegmatis increases resistance to erythromycin, ampicillin, novobiocin and vancomycin. It also reduces accumulation of ethidium bromide in the cell. This is Multidrug efflux ATP-binding/permease protein Rv0194 from Mycobacterium tuberculosis (strain ATCC 25618 / H37Rv).